A 636-amino-acid chain; its full sequence is Nucleolin 2 (636 aa).

Disordered regions lie at residues 1–386 (MGKS…SKTL), 458–481 (ANER…SRTI), and 544–636 (SEIG…NDEE). 2 stretches are compositionally biased toward basic and acidic residues: residues 43 to 63 (KELI…KKVE) and 76 to 89 (EKTK…KDES). Residues 90–103 (SSEEEDDSSSDEEI) are compositionally biased toward acidic residues. Positions 104–118 (APAKKRPEPIKKAKV) are enriched in basic and acidic residues. Composition is skewed to acidic residues over residues 122–133 (SSDDDSTSDEET), 152–163 (SSDDDSSSDEET), and 182–193 (SSDDDSSSDEET). Basic and acidic residues predominate over residues 224–238 (TPAKKEPIVVKKDSS). Composition is skewed to acidic residues over residues 267–278 (SSEEESSSDDEP), 299–311 (SSEE…ESDD), and 331–341 (SSDESSDESDK). Basic and acidic residues predominate over residues 342–367 (EESKDEKVTPKKKDSDVEMVDAEQKS). A compositionally biased stretch (polar residues) spans 368–383 (NAKQPKTPTNQTQGGS). RRM domains follow at residues 384–460 (KTLF…LANE) and 479–558 (RTIY…ESRP). The segment covering 464-481 (PRNSNPGRKGEGSQSRTI) has biased composition (polar residues). Basic and acidic residues-rich tracts occupy residues 552-566 (HVEE…EGRS) and 579-604 (RHSD…DRGA). Polar residues predominate over residues 622-636 (MESSKGTKTVFNDEE).

In terms of assembly, interacts with THAL in the nucleus. In terms of tissue distribution, expressed at low levels in flower buds.

Its subcellular location is the nucleus. The protein resides in the nucleolus. Functionally, involved in pre-rRNA processing and ribosome assembly. In Arabidopsis thaliana (Mouse-ear cress), this protein is Nucleolin 2.